Reading from the N-terminus, the 174-residue chain is Large ribosomal subunit protein uL10 (174 aa).

This sequence belongs to the universal ribosomal protein uL10 family. In terms of assembly, part of the ribosomal stalk of the 50S ribosomal subunit. The N-terminus interacts with L11 and the large rRNA to form the base of the stalk. The C-terminus forms an elongated spine to which L12 dimers bind in a sequential fashion forming a multimeric L10(L12)X complex.

Forms part of the ribosomal stalk, playing a central role in the interaction of the ribosome with GTP-bound translation factors. The sequence is that of Large ribosomal subunit protein uL10 from Bordetella petrii (strain ATCC BAA-461 / DSM 12804 / CCUG 43448).